Reading from the N-terminus, the 84-residue chain is Gas vesicle protein M1 (84 aa).

Positions 1–25 (MEPTKDETHAIVEFVDVLLRDGAVI) are interacts with GvpL1. Positions 5-21 (KDETHAIVEFVDVLLRD) are alpha helix 1. 2 beta-strand regions span residues 27–29 (ADV) and 41–43 (ISL). Positions 44 to 48 (RAAIA) match the Conserved in GvpJ1/2 but not GvpA motif. 2 alpha helix regions span residues 46-56 (AIAGMTTMTEY) and 62-84 (WDAA…RRED).

The protein belongs to the gas vesicle GvpA family. GvpF to GvpM interact with each other in vitro, and may form multi-subunit complex(es). Might interact with GvpA1.

Its subcellular location is the gas vesicle. Proteins GvpF to GvpM might be involved in nucleating gas vesicle formation. A minor component of the gas vesicle. Gas vesicles are hollow, gas filled proteinaceous nanostructures found in several microbial planktonic microorganisms. They allow positioning of halobacteria at the optimal depth for growth in the poorly aerated, shallow brine pools of their habitat. Its function is as follows. Expression of a 9.5 kb p-vac DNA fragment containing 2 divergently transcribed regions (gvpD-gvpE-gvpF-gvpG-gvpH-gvpI-gvpJ-gvpK-gvpL-gvpM and gvpA-gvpC-gvpN-gvpO) allows H.volcanii to produce gas vesicles. All site-directed mutagenesis is tested in H.volcanii. A minimal gas vesicle can be made in H.volcanii by gvpA1-gvpO1 plus gvpF1-gvpG1-gvpJ1-gvpK1-gvpL1-gvpM1; lack of enough GvpJ1 prevents formation. A similar region restores gas vesicle production in H.halobium without the p-vac locus, but it still has the c-vac locus. This chain is Gas vesicle protein M1 (gvpM11), found in Halobacterium salinarum (strain ATCC 700922 / JCM 11081 / NRC-1) (Halobacterium halobium).